The primary structure comprises 160 residues: MTKKKAHKPGSATIALNKRARHEYFIEEEFEAGLALQGWEVKSLRAGKANIGDSYVILKDGEAYLFGANFQPLNVASTHVVCDPTRTRKLLLNQRELDNLYGRINRDGYTVVALSLYWKNAWCKVKIGVAKGKKQHDKRSDLKEREWQLDKARIMKNAGR.

Belongs to the SmpB family.

It is found in the cytoplasm. In terms of biological role, required for rescue of stalled ribosomes mediated by trans-translation. Binds to transfer-messenger RNA (tmRNA), required for stable association of tmRNA with ribosomes. tmRNA and SmpB together mimic tRNA shape, replacing the anticodon stem-loop with SmpB. tmRNA is encoded by the ssrA gene; the 2 termini fold to resemble tRNA(Ala) and it encodes a 'tag peptide', a short internal open reading frame. During trans-translation Ala-aminoacylated tmRNA acts like a tRNA, entering the A-site of stalled ribosomes, displacing the stalled mRNA. The ribosome then switches to translate the ORF on the tmRNA; the nascent peptide is terminated with the 'tag peptide' encoded by the tmRNA and targeted for degradation. The ribosome is freed to recommence translation, which seems to be the essential function of trans-translation. This is SsrA-binding protein from Cronobacter sakazakii (strain ATCC BAA-894) (Enterobacter sakazakii).